The primary structure comprises 93 residues: Head virion protein G6P (93 aa).

Helical transmembrane passes span 25-45 (GVGIFTYVGLTALVDGFLNLL) and 56-76 (ILDILAIAGVPEALSIVGSAL).

Belongs to the inovirus G6P protein family. As to quaternary structure, interacts with G3P; this interaction is required for proper integration of G3P and G6P into the virion.

The protein localises to the virion. It localises to the host membrane. In terms of biological role, plays essential roles both in the entry of the viral genome into the bacterial host and in budding process. The formation of the G3P-G6P complex termed adsorption complex is essential for correct termination of filamentous phage assembly. This chain is Head virion protein G6P (VI), found in Pseudomonas phage Pf3 (Bacteriophage Pf3).